Reading from the N-terminus, the 233-residue chain is Uridylate kinase (233 aa).

9 to 10 lines the ATP pocket; that stretch reads GS. Residue glycine 43 participates in UMP binding. ATP contacts are provided by glycine 44 and arginine 48. Residues aspartate 65 and 113-119 each bind UMP; that span reads VTPGQTT. Residues threonine 139, tyrosine 145, and aspartate 148 each coordinate ATP.

The protein belongs to the UMP kinase family. As to quaternary structure, homohexamer.

It localises to the cytoplasm. It carries out the reaction UMP + ATP = UDP + ADP. It functions in the pathway pyrimidine metabolism; CTP biosynthesis via de novo pathway; UDP from UMP (UMPK route): step 1/1. With respect to regulation, inhibited by UTP. Its function is as follows. Catalyzes the reversible phosphorylation of UMP to UDP. This Methanosarcina barkeri (strain Fusaro / DSM 804) protein is Uridylate kinase.